Reading from the N-terminus, the 159-residue chain is Neuroglobin (159 aa).

The region spanning 3 to 151 (KLSEKDKGLI…VVSAMTRGWA (149 aa)) is the Globin domain. The heme b site is built by His66 and His98.

This sequence belongs to the globin family. In terms of assembly, monomer. Homodimers and homotetramers. Mainly monomeric but also detected as part of homodimers and homotetramers. Detected in brain, eye and gill, but not in muscle and blood (at protein level). Particularly high expression in the periventral zone of tectum opticum, with significant expression detected in white matter, preglomerular nucleus, posterior tubular nucleus, torus longitudinalis, hypothalamus, pituitary gland, posterior tuberculum, hypothalamus, synencephalon and formatio reticularis. Detected also in brain regions of the visual system, predominantly in parts of tectum opticum and torus semicircularis, area dorsalis telencephali and medulla oblongata. Strong expression observed in sensory epithelium of peripheral olfactory organ, and outer and inner nuclear layers and ganglion cell layer of retina.

The protein resides in the cytoplasm. The protein localises to the cytosol. Its subcellular location is the mitochondrion matrix. The catalysed reaction is Fe(III)-heme b-[protein] + nitric oxide + H2O = Fe(II)-heme b-[protein] + nitrite + 2 H(+). Its function is as follows. Monomeric globin with a bis-histidyl six-coordinate heme-iron atom through which it can bind dioxygen, carbon monoxide and nitric oxide. Could help transport oxygen and increase its availability to the metabolically active neuronal tissues, though its low quantity in tissues as well as its high affinity for dioxygen, which may limit its oxygen-releasing ability, argue against it. The ferrous/deoxygenated form exhibits a nitrite reductase activity and it could produce nitric oxide which in turn inhibits cellular respiration in response to hypoxia. In its ferrous/deoxygenated state, it may also exhibit GDI (Guanine nucleotide Dissociation Inhibitor) activity toward heterotrimeric G-alpha proteins, thereby regulating signal transduction to facilitate neuroprotective responses in the wake of hypoxia and associated oxidative stress. The protein is Neuroglobin (ngb) of Danio rerio (Zebrafish).